The chain runs to 114 residues: Amphinase-2 (114 aa).

The Proton acceptor role is filled by histidine 15. 4 disulfide bridges follow: cysteine 26–cysteine 79, cysteine 41–cysteine 85, cysteine 59–cysteine 100, and cysteine 97–cysteine 114. An N-linked (GlcNAc...) asparagine glycan is attached at asparagine 27. 42 to 46 contributes to the substrate binding site; sequence KPINT. Asparagine 67 and asparagine 91 each carry an N-linked (GlcNAc...) asparagine glycan. Histidine 107 serves as the catalytic Proton donor.

The protein belongs to the pancreatic ribonuclease family. In terms of assembly, monomer. There are at least four different forms arising from glycan heterogeneity.

The protein localises to the secreted. Functionally, endonuclease, hydrolyzes highly polymerized RNA, poly(U) and poly(C), and the dinucleotides CpA and UpA. Hydrolyzes 18S and 28S ribosomal RNA. More active towards rCA than rUA or rUG. Has cytotoxic activity against cultured human submaxillary gland carcinoma cells. This chain is Amphinase-2, found in Lithobates pipiens (Northern leopard frog).